Consider the following 835-residue polypeptide: Transcription intermediary factor 1-beta (835 aa).

The span at 1–19 shows a compositional bias: low complexity; the sequence is MAASAAAASAAAASAASGS. Residues 1–49 form a disordered region; it reads MAASAAAASAAAASAASGSPGPGEGSAGGEKRSTAPSAAASASASAAAS. A2 bears the N-acetylalanine mark. S19 and S26 each carry phosphoserine. A Glycyl lysine isopeptide (Lys-Gly) (interchain with G-Cter in SUMO2) cross-link involves residue K31. Residues 35 to 49 show a composition bias toward low complexity; the sequence is APSAAASASASAAAS. S50 bears the Phosphoserine mark. An RING-type zinc finger spans residues 65–121; the sequence is CGVCRERLRPEREPRLLPCLHSACSACLGPAAPAAANSSGDGGAAGDGTVVDCPVCK. The segment at 65-376 is RBCC domain; that stretch reads CGVCRERLRP…LIYFQLHRAL (312 aa). A Glycyl lysine isopeptide (Lys-Gly) (interchain with G-Cter in SUMO2) cross-link involves residue K127. A Phosphoserine modification is found at S138. The B box-type 1; atypical zinc-finger motif lies at 148–195; the sequence is DANQCCTSCEDNAPATSYCVECSEPLCETCVEAHQRVKYTKDHTVRST. Residues C153, C156, C177, and H181 each contribute to the Zn(2+) site. K199 is covalently cross-linked (Glycyl lysine isopeptide (Lys-Gly) (interchain with G-Cter in SUMO2)). A B box-type 2 zinc finger spans residues 204–245; that stretch reads ERTVYCNVHKHEPLVLFCESCDTLTCRDCQLNAHKDHQYQFL. C209, H212, C232, and H237 together coordinate Zn(2+). Positions 246-376 are leucine zipper alpha helical coiled-coil region; the sequence is EDAVRNQRKL…LIYFQLHRAL (131 aa). Positions 247–376 are interaction with MAGEC2; that stretch reads DAVRNQRKLL…LIYFQLHRAL (130 aa). Residues K254 and K261 each participate in a glycyl lysine isopeptide (Lys-Gly) (interchain with G-Cter in SUMO2) cross-link. An N6-acetyllysine modification is found at K266. K272 participates in a covalent cross-link: Glycyl lysine isopeptide (Lys-Gly) (interchain with G-Cter in SUMO2). The residue at position 304 (K304) is an N6-acetyllysine; alternate. Residue K304 forms a Glycyl lysine isopeptide (Lys-Gly) (interchain with G-Cter in SUMO2); alternate linkage. A Glycyl lysine isopeptide (Lys-Gly) (interchain with G-Cter in SUMO2) cross-link involves residue K319. K340 carries the N6-acetyllysine modification. K366 participates in a covalent cross-link: Glycyl lysine isopeptide (Lys-Gly) (interchain with G-Cter in SUMO2). The tract at residues 366–370 is involved in binding PPP1CA; sequence KLIYF. The residue at position 377 (K377) is an N6-acetyllysine; alternate. A Glycyl lysine isopeptide (Lys-Gly) (interchain with G-Cter in SUMO2); alternate cross-link involves residue K377. K377 participates in a covalent cross-link: Glycyl lysine isopeptide (Lys-Gly) (interchain with G-Cter in SUMO1); alternate. A Glycyl lysine isopeptide (Lys-Gly) (interchain with G-Cter in SUMO2) cross-link involves residue K407. The disordered stretch occupies residues 411–480; sequence ERPGTNSTGP…SRSGEGEVSG (70 aa). S417 is subject to Phosphoserine. K434 participates in a covalent cross-link: Glycyl lysine isopeptide (Lys-Gly) (interchain with G-Cter in SUMO2). Over residues 434–443 the composition is skewed to polar residues; sequence KQGSGSSQPM. A phosphoserine mark is found at S437, S439, and S453. K469 is covalently cross-linked (Glycyl lysine isopeptide (Lys-Gly) (interchain with G-Cter in SUMO2); alternate). K469 is covalently cross-linked (Glycyl lysine isopeptide (Lys-Gly) (interchain with G-Cter in SUMO1); alternate). A Citrulline modification is found at R470. At S471 the chain carries Phosphoserine. R472 carries the post-translational modification Citrulline. Phosphoserine occurs at positions 473, 479, and 489. Positions 476 to 513 are HP1 box; that stretch reads GEVSGLMRKVPRVSLERLDLDLTADSQPPVFKVFPGST. Positions 481–494 match the PxVxL motif motif; the sequence is LMRKVPRVSLERLD. Residue T498 is modified to Phosphothreonine. S501 carries the phosphoserine modification. K507 is covalently cross-linked (Glycyl lysine isopeptide (Lys-Gly) (interchain with G-Cter in SUMO2)). Residue T541 is modified to Phosphothreonine. Residue K554 forms a Glycyl lysine isopeptide (Lys-Gly) (interchain with G-Cter in SUMO2); alternate linkage. A Glycyl lysine isopeptide (Lys-Gly) (interchain with G-Cter in SUMO); alternate cross-link involves residue K554. A Glycyl lysine isopeptide (Lys-Gly) (interchain with G-Cter in SUMO2) cross-link involves residue K575. The disordered stretch occupies residues 584–618; that stretch reads GPGAEGPRLASPSGSTSSGLEVVAPEGTSAPGGGP. S594 is subject to Phosphoserine. The PHD-type zinc finger occupies 625 to 672; the sequence is ATICRVCQKPGDLVMCNQCEFCFHLDCHLPALQDVPGEEWSCSLCHVL. K676 is covalently cross-linked (Glycyl lysine isopeptide (Lys-Gly) (interchain with G-Cter in SUMO)). S683, S689, and S697 each carry phosphoserine. One can recognise a Bromo domain in the interval 695–799; sequence KLSPANQRKC…RFFETRMNEA (105 aa). Residue K750 forms a Glycyl lysine isopeptide (Lys-Gly) (interchain with G-Cter in SUMO2); alternate linkage. K750 participates in a covalent cross-link: Glycyl lysine isopeptide (Lys-Gly) (interchain with G-Cter in SUMO1); alternate. A Glycyl lysine isopeptide (Lys-Gly) (interchain with G-Cter in SUMO); alternate cross-link involves residue K750. S752 is modified (phosphoserine). Y755 carries the phosphotyrosine modification. Position 757 is a phosphoserine (S757). N6-acetyllysine; alternate occurs at positions 770, 774, and 779. Glycyl lysine isopeptide (Lys-Gly) (interchain with G-Cter in SUMO2); alternate cross-links involve residues K770, K774, and K779. K779 participates in a covalent cross-link: Glycyl lysine isopeptide (Lys-Gly) (interchain with G-Cter in SUMO1); alternate. Residue S784 is modified to Phosphoserine. K804 participates in a covalent cross-link: Glycyl lysine isopeptide (Lys-Gly) (interchain with G-Cter in SUMO2); alternate. K804 is covalently cross-linked (Glycyl lysine isopeptide (Lys-Gly) (interchain with G-Cter in SUMO); alternate). Residues 815 to 835 form a disordered region; the sequence is MSLPGAGLSSQELSGGPGDGP. S824 bears the Phosphoserine; by ATM and ATR and dsDNA kinase mark.

This sequence belongs to the TRIM/RBCC family. In terms of assembly, interacts with SETX. Oligomer; the RBCC domain homotrimerizes and interacts with one molecule of KRAB to form the KRAB-KAP1 corepressor complex. Binding to a KRAB domain is an absolute requirement for silencing gene expression. Interacts with CEBPB and NR3C1. Interacts with a number of KRAB-ZFP proteins including ZNF10, ZFP53, ZFP68, ZNF382 and ZNF256. Interacts with NCOR1, NR3C1 and CHD3. Interacts with CEBPB (via the RING-type and PHD-type zinc fingers). Component of a ternary complex that includes TRIM28, a HP1 protein (CBX1, CBX3 OR CBX5), a KRAB domain-containing protein, and DNA. Interacts with CBX5 (via the PxVxL motif); the interaction occurs in interphase nuclei and competes for binding POGZ. Interacts with POGZ; the interaction competes for interaction with CBX5. Interacts with SETDB1; the interaction is enhanced by KAP1 sumoylation, stimulates SETDB1 histone methyltransferase activity and gene silencing. Interacts (via the PHD-type zinc finger) with UBE2I; the interaction is required for sumoylation and repressor activity. Component of the TRIM28/KAP1-ERBB4-MDM2 complex involved in connecting growth factor and DNA damage responses. Interacts directly with ERBB4; the interaction represses ERBB4-mediated transcription activity. Interacts with MDM2; the interaction contributes to p53/TP53 inactivation. Component of the TRIM28/KAP1-MDM2-p53/TP53; involved in regulating p53/TP53 stabilization and activity. Interacts (via the leucine zipper alpha helical coiled-coil) with E2F1 (central region); the interaction inhibits E2F1 acetylation and transcriptional activity. Interacts with PPP1CA; the interaction dephosphorylates TRIM28 at Ser-824 and forms a complex at the p21 promoter site. Interacts with PPP1CB; the interaction is weak but is increased on dephosphorylation at Ser-824. Interacts with FES/FPS. Interacts with SMARCAD1. Interacts with, and sumoylates IRF7. Interacts with MAGEC2. Part of a complex composed of TRIM28, HDAC1, HDAC2 and EHMT2. Interacts with AICDA. Interacts (via the RBCC domain) with KOX1 (via the KRAB domain), ZNF268 (via the KRAB domain) and ZNF300 (via the KRAB domain); the interactions increase KOX1, ZNF268 and ZNF300 nuclear localization activities. The large PER complex involved in the histone methylation is composed of at least PER2, CBX3, TRIM28, SUV39H1 and/or SUV39H2; CBX3 mediates the formation of the complex. Interacts with isoform 2 of ZFP90. Forms a complex with FOXP3 in the presence of isoform 2 of ZFP90. Interacts with NR4A3; the interactions potentiates NR4A3 activity on NurRE promoter. Interacts (unphosphorylated or phosphorylated form) with ZBTB1 (via BTB domain). Probably part of a corepressor complex containing ZNF304, TRIM28, SETDB1 and DNMT1. Interacts with ATRX. Forms a complex with ATRX, SETDB1 and ZNF274. Interacts with ZFP568; the interaction mediates ZFP568 transcriptional repression activity. Interacts with RRP1B. Interacts with CRY1. Interacts with ZNF263; recruited to the SIX3 promoter along with other proteins involved in chromatin modification and transcriptional corepression where it contributes to transcriptional repression. Interacts with CYREN (via XLF motif). Interacts with TRIM17; this interaction prevents TRIM28 activity. Interacts with ZNF746. Interacts with PHF13. Interacts with ZNF354C. Interacts with ZNF432; the interaction is independent of PARP1. As to quaternary structure, (Microbial infection) Interacts with herpes virus 8 protein LANA1; this interaction facilitates establishment of viral latency. ATM-induced phosphorylation on Ser-824 represses sumoylation leading to the de-repression of expression of a subset of genes involved in cell cycle control and apoptosis in response to genotoxic stress. Dephosphorylation by the phosphatases, PPP1CA and PP1CB forms, allows sumoylation and expression of TRIM28 target genes. Post-translationally, sumoylation/desumoylation events regulate TRIM28-mediated transcriptional repression. Sumoylation is required for interaction with CHD3 and SETDB1 and the corepressor activity. Represses and is repressed by Ser-824 phosphorylation. Enhances the TRIM28 corepressor activity, inhibiting transcriptional activity of a number of genes including GADD45A and CDKN1A/p21. Lys-554, Lys-779 and Lys-804 are the major sites of sumoylation. In response to Dox-induced DNA damage, enhanced phosphorylation on Ser-824 prevents sumoylation and allows de-repression of CDKN1A/p21. In terms of processing, auto-ubiquitinated; enhanced by MAGEA2 and MAGEC2. Citrullinated by PADI4. Post-translationally, ADP-ribosylated by SIRT6, promoting TRIM28/KAP1 interaction with CBX5, thereby contributing to the packaging of LINE-1 retrotransposon elements into transcriptionally repressive heterochromatin. As to expression, expressed in all tissues tested including spleen, thymus, prostate, testis, ovary, small intestine, colon and peripheral blood leukocytes.

The protein resides in the nucleus. It catalyses the reaction S-ubiquitinyl-[E2 ubiquitin-conjugating enzyme]-L-cysteine + [acceptor protein]-L-lysine = [E2 ubiquitin-conjugating enzyme]-L-cysteine + N(6)-ubiquitinyl-[acceptor protein]-L-lysine.. It participates in protein modification; protein sumoylation. In terms of biological role, nuclear corepressor for KRAB domain-containing zinc finger proteins (KRAB-ZFPs). Mediates gene silencing by recruiting CHD3, a subunit of the nucleosome remodeling and deacetylation (NuRD) complex, and SETDB1 (which specifically methylates histone H3 at 'Lys-9' (H3K9me)) to the promoter regions of KRAB target genes. Enhances transcriptional repression by coordinating the increase in H3K9me, the decrease in histone H3 'Lys-9 and 'Lys-14' acetylation (H3K9ac and H3K14ac, respectively) and the disposition of HP1 proteins to silence gene expression. Recruitment of SETDB1 induces heterochromatinization. May play a role as a coactivator for CEBPB and NR3C1 in the transcriptional activation of ORM1. Also a corepressor for ERBB4. Inhibits E2F1 activity by stimulating E2F1-HDAC1 complex formation and inhibiting E2F1 acetylation. May serve as a partial backup to prevent E2F1-mediated apoptosis in the absence of RB1. Important regulator of CDKN1A/p21(CIP1). Has E3 SUMO-protein ligase activity toward itself via its PHD-type zinc finger. Also specifically sumoylates IRF7, thereby inhibiting its transactivation activity. Ubiquitinates p53/TP53 leading to its proteasomal degradation; the function is enhanced by MAGEC2 and MAGEA2, and possibly MAGEA3 and MAGEA6. Mediates the nuclear localization of KOX1, ZNF268 and ZNF300 transcription factors. In association with isoform 2 of ZFP90, is required for the transcriptional repressor activity of FOXP3 and the suppressive function of regulatory T-cells (Treg). Probably forms a corepressor complex required for activated KRAS-mediated promoter hypermethylation and transcriptional silencing of tumor suppressor genes (TSGs) or other tumor-related genes in colorectal cancer (CRC) cells. Required to maintain a transcriptionally repressive state of genes in undifferentiated embryonic stem cells (ESCs). In ESCs, in collaboration with SETDB1, is also required for H3K9me3 and silencing of endogenous and introduced retroviruses in a DNA-methylation independent-pathway. Associates at promoter regions of tumor suppressor genes (TSGs) leading to their gene silencing. The SETDB1-TRIM28-ZNF274 complex may play a role in recruiting ATRX to the 3'-exons of zinc-finger coding genes with atypical chromatin signatures to establish or maintain/protect H3K9me3 at these transcriptionally active regions. Functionally, (Microbial infection) Plays a critical role in the shutdown of lytic gene expression during the early stage of herpes virus 8 primary infection. This inhibition is mediated through interaction with herpes virus 8 protein LANA1. The sequence is that of Transcription intermediary factor 1-beta from Homo sapiens (Human).